The following is a 199-amino-acid chain: Acireductone dioxygenase 1 (199 aa).

Fe(2+) contacts are provided by His99, His101, Glu105, and His144. Residues His99, His101, Glu105, and His144 each coordinate Ni(2+).

This sequence belongs to the acireductone dioxygenase (ARD) family. The cofactor is Fe(2+). It depends on Ni(2+) as a cofactor.

Its subcellular location is the cytoplasm. It localises to the nucleus. The enzyme catalyses 1,2-dihydroxy-5-(methylsulfanyl)pent-1-en-3-one + O2 = 4-methylsulfanyl-2-oxobutanoate + formate + 2 H(+). It carries out the reaction 1,2-dihydroxy-5-(methylsulfanyl)pent-1-en-3-one + O2 = 3-(methylsulfanyl)propanoate + CO + formate + 2 H(+). It participates in amino-acid biosynthesis; L-methionine biosynthesis via salvage pathway; L-methionine from S-methyl-5-thio-alpha-D-ribose 1-phosphate: step 5/6. Its function is as follows. Catalyzes 2 different reactions between oxygen and the acireductone 1,2-dihydroxy-3-keto-5-methylthiopentene (DHK-MTPene) depending upon the metal bound in the active site. Fe-containing acireductone dioxygenase (Fe-ARD) produces formate and 2-keto-4-methylthiobutyrate (KMTB), the alpha-ketoacid precursor of methionine in the methionine recycle pathway. Ni-containing acireductone dioxygenase (Ni-ARD) produces methylthiopropionate, carbon monoxide and formate, and does not lie on the methionine recycle pathway. The protein is Acireductone dioxygenase 1 (ARD1) of Oryza sativa subsp. indica (Rice).